The sequence spans 36 residues: Lambda-hexatoxin-Hv1b (36 aa).

4 disulfide bridges follow: C3–C17, C10–C22, C13–C14, and C16–C33.

The protein belongs to the neurotoxin 11 (kappa toxin) family. As to expression, expressed by the venom gland.

It is found in the secreted. This excitatory toxin inhibits insect calcium-activated potassium (KCa) channels (Slo-type). This is Lambda-hexatoxin-Hv1b from Hadronyche versuta (Blue mountains funnel-web spider).